The following is a 255-amino-acid chain: Eukaryotic translation initiation factor 3 subunit J (255 aa).

Acidic residues-rich tracts occupy residues M1–D16 and E34–Q53. The interval M1–E107 is disordered. Over residues D54–A95 the composition is skewed to basic and acidic residues. A coiled-coil region spans residues E69–A131.

The protein belongs to the eIF-3 subunit J family. As to quaternary structure, component of the eukaryotic translation initiation factor 3 (eIF-3) complex, which is composed of 13 subunits: eif3a, eif3b, eif3c, eif3d, eif3e, eif3f, eif3g, eif3h, eif3i, eif3j, eif3k, eif3l and eif3m.

The protein localises to the cytoplasm. In terms of biological role, component of the eukaryotic translation initiation factor 3 (eIF-3) complex, which is involved in protein synthesis of a specialized repertoire of mRNAs and, together with other initiation factors, stimulates binding of mRNA and methionyl-tRNAi to the 40S ribosome. The eIF-3 complex specifically targets and initiates translation of a subset of mRNAs involved in cell proliferation. In Xenopus laevis (African clawed frog), this protein is Eukaryotic translation initiation factor 3 subunit J (eif3j).